Consider the following 218-residue polypeptide: Epoxyqueuosine reductase QueH (218 aa).

Residues C22, C23, C101, and C104 each coordinate [4Fe-4S] cluster. C184 and C186 are joined by a disulfide.

The protein belongs to the QueH family.

It catalyses the reaction epoxyqueuosine(34) in tRNA + AH2 = queuosine(34) in tRNA + A + H2O. It functions in the pathway tRNA modification; tRNA-queuosine biosynthesis. Its function is as follows. Catalyzes the conversion of epoxyqueuosine (oQ) to queuosine (Q), which is a hypermodified base found in the wobble positions of tRNA(Asp), tRNA(Asn), tRNA(His) and tRNA(Tyr). This Acinetobacter baylyi (strain ATCC 33305 / BD413 / ADP1) protein is Epoxyqueuosine reductase QueH.